A 387-amino-acid polypeptide reads, in one-letter code: Phosphoglycerate kinase (387 aa).

Substrate is bound by residues Asp-21–Asn-23, Arg-36, His-59–Arg-62, Arg-113, and Arg-146. Residues Lys-197, Glu-314, and Gly-340–Thr-343 contribute to the ATP site.

This sequence belongs to the phosphoglycerate kinase family. In terms of assembly, monomer.

It is found in the cytoplasm. It carries out the reaction (2R)-3-phosphoglycerate + ATP = (2R)-3-phospho-glyceroyl phosphate + ADP. It participates in carbohydrate degradation; glycolysis; pyruvate from D-glyceraldehyde 3-phosphate: step 2/5. The chain is Phosphoglycerate kinase from Aliivibrio salmonicida (strain LFI1238) (Vibrio salmonicida (strain LFI1238)).